A 295-amino-acid polypeptide reads, in one-letter code: Golgi-associated RAB2 interactor protein 1A (295 aa).

The segment at 187–206 (MPNSSTETTPESSRPASSQS) is disordered. Positions 190-206 (SSTETTPESSRPASSQS) are enriched in low complexity. 4 positions are modified to phosphoserine: S220, S221, S251, and S255.

Belongs to the GARIN family. As to quaternary structure, interacts (via N-terminus) with RAB2B (in GTP-bound form).

The protein resides in the golgi apparatus. Functionally, RAB2B effector protein required for accurate acrosome formation and normal male fertility. This is Golgi-associated RAB2 interactor protein 1A (Garin1a) from Rattus norvegicus (Rat).